A 341-amino-acid chain; its full sequence is tRNA N6-adenosine threonylcarbamoyltransferase (341 aa).

Residues His-111 and His-115 each contribute to the Fe cation site. Substrate is bound by residues 134 to 138 (LVSGG), Asp-167, Gly-180, and Asn-276. Residue Asp-304 participates in Fe cation binding.

This sequence belongs to the KAE1 / TsaD family. The cofactor is Fe(2+).

It localises to the cytoplasm. The enzyme catalyses L-threonylcarbamoyladenylate + adenosine(37) in tRNA = N(6)-L-threonylcarbamoyladenosine(37) in tRNA + AMP + H(+). In terms of biological role, required for the formation of a threonylcarbamoyl group on adenosine at position 37 (t(6)A37) in tRNAs that read codons beginning with adenine. Is involved in the transfer of the threonylcarbamoyl moiety of threonylcarbamoyl-AMP (TC-AMP) to the N6 group of A37, together with TsaE and TsaB. TsaD likely plays a direct catalytic role in this reaction. This Pseudomonas putida (strain ATCC 47054 / DSM 6125 / CFBP 8728 / NCIMB 11950 / KT2440) protein is tRNA N6-adenosine threonylcarbamoyltransferase.